The following is a 159-amino-acid chain: Insulin-like peptide 7 (159 aa).

An N-terminal signal peptide occupies residues M1–A31. 3 disulfides stabilise this stretch: C63/C136, C75/C150, and C135/C141. Positions T90–S121 are cleaved as a propeptide — connecting peptide.

It belongs to the insulin family. Heterodimer of a B chain and an A chain linked by two disulfide bonds. In terms of tissue distribution, broadly expressed at a low level throughout the embryo, except the yolk. Expressed at a moderate level in the embryonic midgut. Larval expression is restricted to ten cells of the ventral nerve cord - in four pairs of centrally located cells in the most posterior abdominal segments and in one pair of dorsally located cells in the A1 or A2 segments.

It is found in the secreted. In terms of biological role, possible ligand of InR/insulin-like receptor. The protein is Insulin-like peptide 7 of Drosophila melanogaster (Fruit fly).